The sequence spans 154 residues: Small ribosomal subunit protein bS16 (154 aa).

Residues 82-154 form a disordered region; it reads VQERAARSNP…EAAAEESTEA (73 aa). Basic and acidic residues predominate over residues 92 to 109; it reads KKAEPGEKAKERAEERAA. Low complexity predominate over residues 110–129; the sequence is KLAAAEEAANAPAEEPAAEP. The span at 142 to 154 shows a compositional bias: acidic residues; sequence PAEEAAAEESTEA.

Belongs to the bacterial ribosomal protein bS16 family.

The sequence is that of Small ribosomal subunit protein bS16 from Rhizorhabdus wittichii (strain DSM 6014 / CCUG 31198 / JCM 15750 / NBRC 105917 / EY 4224 / RW1) (Sphingomonas wittichii).